A 662-amino-acid polypeptide reads, in one-letter code: Zinc finger protein 800 (662 aa).

The C2H2-type 1; degenerate zinc-finger motif lies at 69–91 (FECKLCRSLFRGLPNLITHKKFY). A Glycyl lysine isopeptide (Lys-Gly) (interchain with G-Cter in SUMO2) cross-link involves residue lysine 132. Disordered regions lie at residues 172-197 (ETSS…PPSI) and 205-224 (AAPT…TSDS). Residues 205–216 (AAPTEEQPQESQ) are compositionally biased toward low complexity. The C2H2-type 2 zinc finger occupies 231-254 (LICCLCRKEFNSRRGVRRHIRKVH). Residue lysine 280 forms a Glycyl lysine isopeptide (Lys-Gly) (interchain with G-Cter in SUMO2) linkage. A C2H2-type 3 zinc finger spans residues 288 to 311 (RSCPVCCKSFATKANVRRHFDEVH). Serine 318 carries the phosphoserine modification. The disordered stretch occupies residues 319-349 (ITPDIATKPGQPLFLDSASPKKSFKTRKQKS). Phosphothreonine is present on threonine 320. At serine 337 the chain carries Phosphoserine. Residues 340 to 349 (KSFKTRKQKS) are compositionally biased toward basic residues. The C2H2-type 4 zinc-finger motif lies at 357–382 (TACKCLLCKRKYSSQIMLKRHMQIVH). The segment at 389–473 (ANSKREKGPN…AGGQQKTRKP (85 aa)) is disordered. Lysine 392 participates in a covalent cross-link: Glycyl lysine isopeptide (Lys-Gly) (interchain with G-Cter in SUMO2). Over residues 414–434 (VESSPPSITHSPQNELKGTNH) the composition is skewed to polar residues. Residues serine 420, serine 424, serine 453, serine 455, serine 458, and serine 460 each carry the phosphoserine modification. The span at 456 to 468 (PKSASPSAAGGQQ) shows a compositional bias: low complexity. A Glycyl lysine isopeptide (Lys-Gly) (interchain with G-Cter in SUMO2) cross-link involves residue lysine 474. 2 C2H2-type zinc fingers span residues 484-506 (LYCK…IELH) and 517-540 (YKCP…TVVH). Disordered regions lie at residues 573–597 (RGPS…PSKK) and 633–662 (HHKK…KALV). Residues 575–587 (PSREEAKHNDSKQ) are compositionally biased toward basic and acidic residues. A Glycyl lysine isopeptide (Lys-Gly) (interchain with G-Cter in SUMO2) cross-link involves residue lysine 597. Residues 616-638 (HRCNKCGKAFAKKTYLEHHKKTH) form a C2H2-type 7 zinc finger. Basic residues predominate over residues 651–662 (TKGRSTRSKALV).

Belongs to the krueppel C2H2-type zinc-finger protein family.

Its subcellular location is the nucleus. In terms of biological role, may be involved in transcriptional regulation. The chain is Zinc finger protein 800 (Znf800) from Mus musculus (Mouse).